The chain runs to 242 residues: Probable inactive serine protease 58 (242 aa).

An N-terminal signal peptide occupies residues 1–17; that stretch reads MNLILLWALLNLPVALT. Residues 18 to 240 enclose the Peptidase S1 domain; that stretch reads FDPNYKDDIT…YIPWIENTIQ (223 aa). 4 disulfides stabilise this stretch: cysteine 41-cysteine 57, cysteine 134-cysteine 202, cysteine 166-cysteine 181, and cysteine 192-cysteine 216. The N-linked (GlcNAc...) asparagine glycan is linked to asparagine 157.

Belongs to the peptidase S1 family.

It is found in the secreted. This Bos taurus (Bovine) protein is Probable inactive serine protease 58 (PRSS58).